The sequence spans 74 residues: Putative defensin-like protein 36 (74 aa).

The first 22 residues, 1–22 (MASNKVSFFLVLCLCILLAGEC), serve as a signal peptide directing secretion. 3 disulfides stabilise this stretch: Cys33–Cys59, Cys45–Cys69, and Cys49–Cys71.

The protein belongs to the DEFL family.

The protein resides in the secreted. The chain is Putative defensin-like protein 36 from Arabidopsis thaliana (Mouse-ear cress).